A 351-amino-acid polypeptide reads, in one-letter code: Anthranilate phosphoribosyltransferase (351 aa).

Residues glycine 84, 87-88 (GD), 95-98 (NISS), 113-121 (KHGNRGASS), and alanine 125 contribute to the 5-phospho-alpha-D-ribose 1-diphosphate site. Residue glycine 84 coordinates anthranilate. Serine 97 lines the Mg(2+) pocket. Asparagine 116 is an anthranilate binding site. Residue arginine 171 coordinates anthranilate. Residues aspartate 229 and lysine 230 each coordinate Mg(2+).

It belongs to the anthranilate phosphoribosyltransferase family. Homodimer. Mg(2+) serves as cofactor.

It catalyses the reaction N-(5-phospho-beta-D-ribosyl)anthranilate + diphosphate = 5-phospho-alpha-D-ribose 1-diphosphate + anthranilate. Its pathway is amino-acid biosynthesis; L-tryptophan biosynthesis; L-tryptophan from chorismate: step 2/5. Functionally, catalyzes the transfer of the phosphoribosyl group of 5-phosphorylribose-1-pyrophosphate (PRPP) to anthranilate to yield N-(5'-phosphoribosyl)-anthranilate (PRA). The chain is Anthranilate phosphoribosyltransferase from Clavibacter michiganensis subsp. michiganensis (strain NCPPB 382).